Here is a 704-residue protein sequence, read N- to C-terminus: MDKLRGARPLRLLLLLLALLPALRGQDLSMEECCDKGVEWANKNRICTSLPLISESRECSMTQVQCCRSKLEEHYCSDGIEFASVHEECDSHNGENSTCEAEYFKKCCYCCLLGKTAQVQGQSCEPNLKIGYQCGIVFRACCVKGQEGTDVSISDDAPKKEQVEISKEELDQEDPYLHDGCRGGGPCSQQCRDTGSSYVCSCFVGYQLQPDGVNCEDINECITGTHSCGIGQTCVNTLGSFRCQRDTSCGTGYELTDDSRCKDIDECETGTHNCPPDFICQNTPGSFRCRPKLQCMNGFIQDALGNCIDINECLSTNMPCPAGQICINTDGSYTCQRISPSCGRGYHLNEDGTRCVDVDECSSSDQPCGEGHVCINGPGNYRCECKSGYSFDVISRTCIDINECRRYPGRLCAHKCENTPGSYYCTCTMGFKLSSDGRSCEDLNECESSPCSQECANVYGSYQCYCRRGFQLSDIDGISCEDIDECALPTGGHICSFRCINIPGSFQCTCPSTGYRLAPNARNCQDIDECVAETHNCSFNETCFNIQGGFRCLSLECPENYRKSGDTVRLEKTDTIRCIKSCRPNDVNCVLDPVHTISHTVISLPTFREFTRPEEIIFLRAITPTYPANQADIIFDITEGNLRESFDIIKRYMDGMTVGVVRQVRPIVGPFHAILKLEMNYVMGGVVSHRNIVNVHIFVSEYWF.

The N-terminal stretch at 1–25 is a signal peptide; that stretch reads MDKLRGARPLRLLLLLLALLPALRG. Disulfide bonds link C33–C59, C34–C66, C47–C67, C76–C107, C89–C108, C110–C134, C111–C141, C124–C142, C181–C191, C187–C200, C202–C215, C221–C234, C228–C243, C249–C261, C267–C280, C274–C289, C295–C307, C313–C326, C320–C335, C342–C355, C361–C374, C368–C383, C385–C398, C404–C416, C412–C425, C427–C440, C446–C455, C451–C464, C466–C480, C486–C499, C495–C508, C510–C524, C530–C543, C537–C552, and C557–C578. 3 Anaphylatoxin-like domains span residues 33-74, 75-109, and 110-142; these read CCDK…LEEH, YCSD…KCCY, and CCLL…RACC. N96 carries N-linked (GlcNAc...) asparagine glycosylation. In terms of domain architecture, EGF-like 1 spans 177 to 216; it reads LHDGCRGGGPCSQQCRDTGSSYVCSCFVGYQLQPDGVNCE. The EGF-like 2; calcium-binding domain maps to 217–262; sequence DINECITGTHSCGIGQTCVNTLGSFRCQRDTSCGTGYELTDDSRCK. An EGF-like 3; calcium-binding domain is found at 263-308; the sequence is DIDECETGTHNCPPDFICQNTPGSFRCRPKLQCMNGFIQDALGNCI. One can recognise an EGF-like 4; calcium-binding domain in the interval 309-356; that stretch reads DINECLSTNMPCPAGQICINTDGSYTCQRISPSCGRGYHLNEDGTRCV. Residues 357-399 enclose the EGF-like 5; calcium-binding domain; sequence DVDECSSSDQPCGEGHVCINGPGNYRCECKSGYSFDVISRTCI. Residues 357–441 are self-association and FN1-binding; sequence DVDECSSSDQ…KLSSDGRSCE (85 aa). Residues 400–441 form the EGF-like 6; calcium-binding domain; sequence DINECRRYPGRLCAHKCENTPGSYYCTCTMGFKLSSDGRSCE. Residues 442–481 form the EGF-like 7; calcium-binding domain; sequence DLNECESSPCSQECANVYGSYQCYCRRGFQLSDIDGISCE. The region spanning 482 to 525 is the EGF-like 8; calcium-binding domain; sequence DIDECALPTGGHICSFRCINIPGSFQCTCPSTGYRLAPNARNCQ. The 54-residue stretch at 526-579 folds into the EGF-like 9; calcium-binding domain; the sequence is DIDECVAETHNCSFNETCFNIQGGFRCLSLECPENYRKSGDTVRLEKTDTIRCI. N-linked (GlcNAc...) asparagine glycosylation is found at N536 and N540.

It belongs to the fibulin family. As to quaternary structure, homomultimerizes and interacts with various extracellular matrix components.

It localises to the secreted. It is found in the extracellular space. The protein localises to the extracellular matrix. Incorporated into fibronectin-containing matrix fibers. May play a role in cell adhesion and migration along protein fibers within the extracellular matrix (ECM). Could be important for certain developmental processes and contribute to the supramolecular organization of ECM architecture, in particular to those of basement membranes. This chain is Fibulin-1 (FBLN1), found in Gallus gallus (Chicken).